Consider the following 820-residue polypeptide: Cell division control protein 48 homolog C (820 aa).

Disordered regions lie at residues 72–157 and 169–188; these read RVKD…RFDL and LNSS…VEVE. The segment covering 76–87 has biased composition (acidic residues); it reads EDEDDNIGDEEG. Residues 85–122 adopt a coiled-coil conformation; sequence EEGSASQRKKQRRVDEKEEKLQRAEQSHLRKRNMERSV. Residues 97–119 show a composition bias toward basic and acidic residues; sequence RVDEKEEKLQRAEQSHLRKRNME. Residues 121 to 142 show a composition bias toward low complexity; it reads SVSSSPSSSSSSEDSGDVSTSE. ATP is bound by residues 274–281 and 569–576; these read GPPGCGKT.

This sequence belongs to the AAA ATPase family.

The protein resides in the nucleus. Its subcellular location is the cytoplasm. The protein localises to the cytoskeleton. It localises to the phragmoplast. In terms of biological role, probably functions in cell division and growth processes. Interacts with certain SNAREs as part of specialized membrane fusion events where vesicles from the same organelle fuse (homotypic fusion). This chain is Cell division control protein 48 homolog C (CDC48C), found in Arabidopsis thaliana (Mouse-ear cress).